Reading from the N-terminus, the 135-residue chain is Ribonuclease VapC35 (135 aa).

Positions 2 to 123 (IYLETSALVK…DNRLKEAAEA (122 aa)) constitute a PINc domain. Positions 5 and 91 each coordinate Mg(2+).

It belongs to the PINc/VapC protein family. Requires Mg(2+) as cofactor.

Its function is as follows. Toxic component of a type II toxin-antitoxin (TA) system. An RNase. Its toxic effect is neutralized by coexpression with cognate antitoxin VapB35. This Mycobacterium tuberculosis (strain CDC 1551 / Oshkosh) protein is Ribonuclease VapC35.